A 311-amino-acid polypeptide reads, in one-letter code: DNA repair and recombination protein RadA (311 aa).

104 to 111 (GEFGSGKS) contributes to the ATP binding site.

The protein belongs to the eukaryotic RecA-like protein family.

Its function is as follows. Involved in DNA repair and in homologous recombination. Binds and assemble on single-stranded DNA to form a nucleoprotein filament. Hydrolyzes ATP in a ssDNA-dependent manner and promotes DNA strand exchange between homologous DNA molecules. The sequence is that of DNA repair and recombination protein RadA from Methanobrevibacter smithii (strain ATCC 35061 / DSM 861 / OCM 144 / PS).